The primary structure comprises 723 residues: Nucleolar protein 11 (723 aa).

Lysine 346 is modified (N6-methyllysine). The disordered stretch occupies residues 549 to 572 (FGPEDGNCSEDSQQLNDKPADTAH).

In terms of assembly, interacts with UTP4. Interacts with FBL/fibrillarin in a transcription-dependent manner. May associate with the proposed t-UTP subcomplex of the SSU processome containing at least UTP4, WDR43, HEATR1, UTP15, WDR75.

The protein resides in the nucleus. It is found in the nucleolus. Ribosome biogenesis factor. May be required for both optimal rDNA transcription and small subunit (SSU) pre-rRNA processing at sites A', A0, 1 and 2b. The sequence is that of Nucleolar protein 11 (Nol11) from Mus musculus (Mouse).